Reading from the N-terminus, the 67-residue chain is Beta-defensin 103 (67 aa).

A signal peptide spans 1 to 22 (MRIHYLLFALLFLFLVPVPGHG). Intrachain disulfides connect cysteine 33/cysteine 62, cysteine 40/cysteine 55, and cysteine 45/cysteine 63.

As to expression, highly expressed in skin and tonsils, and to a lesser extent in trachea, uterus, kidney, thymus, adenoid, pharynx and tongue. Low expression in salivary gland, bone marrow, colon, stomach, polyp and larynx. No expression in small intestine.

The protein resides in the secreted. Exhibits antimicrobial activity against Gram-positive bacteria S.aureus and S.pyogenes, Gram-negative bacteria P.aeruginosa and E.coli and the yeast C.albicans. Kills multiresistant S.aureus and vancomycin-resistant E.faecium. No significant hemolytic activity was observed. The polypeptide is Beta-defensin 103 (DEFB103A) (Homo sapiens (Human)).